Consider the following 426-residue polypeptide: Enolase (426 aa).

Q165 lines the (2R)-2-phosphoglycerate pocket. The Proton donor role is filled by E209. Mg(2+)-binding residues include D244, E287, and D313. K338, R367, S368, and K389 together coordinate (2R)-2-phosphoglycerate. K338 acts as the Proton acceptor in catalysis.

Belongs to the enolase family. Mg(2+) serves as cofactor.

The protein localises to the cytoplasm. The protein resides in the secreted. It localises to the cell surface. The catalysed reaction is (2R)-2-phosphoglycerate = phosphoenolpyruvate + H2O. It functions in the pathway carbohydrate degradation; glycolysis; pyruvate from D-glyceraldehyde 3-phosphate: step 4/5. In terms of biological role, catalyzes the reversible conversion of 2-phosphoglycerate (2-PG) into phosphoenolpyruvate (PEP). It is essential for the degradation of carbohydrates via glycolysis. In Methanococcus maripaludis (strain DSM 14266 / JCM 13030 / NBRC 101832 / S2 / LL), this protein is Enolase.